A 137-amino-acid chain; its full sequence is Small ribosomal subunit protein uS9 (137 aa).

Residues 103–137 (PPLKAEGYLTRDPRAKERKKYGLHKARKAPQYSKR) form a disordered region. Over residues 118–137 (KERKKYGLHKARKAPQYSKR) the composition is skewed to basic residues.

This sequence belongs to the universal ribosomal protein uS9 family.

This Crocosphaera subtropica (strain ATCC 51142 / BH68) (Cyanothece sp. (strain ATCC 51142)) protein is Small ribosomal subunit protein uS9.